Consider the following 215-residue polypeptide: MINLALVIFLCTLLNQIVSWVGKSVLQEIAFTAYSWVFLSGTAAKQRKLRKQVLEDKAELGRTSSQDEFAKWAKLRRKLDKGLADLEKTNNTLSSSRSSFSKKFSTLLWLMTTGAQFLLSWWFRKQPIFWLPEGWVPYPVAWLLSFPSAPIGSVSSGAWGAICRRVLSTLQEIIQSLLAPSPAATGPVPTGPSSAKNDQPEAKIEALALEHEKLD.

The Lumenal segment spans residues 1–4 (MINL). Residues 5–24 (ALVIFLCTLLNQIVSWVGKS) form a helical membrane-spanning segment. Residues 25–108 (VLQEIAFTAY…SFSKKFSTLL (84 aa)) lie on the Cytoplasmic side of the membrane. Residues 73 to 94 (AKLRRKLDKGLADLEKTNNTLS) adopt a coiled-coil conformation. The helical transmembrane segment at 109 to 129 (WLMTTGAQFLLSWWFRKQPIF) threads the bilayer. The Lumenal segment spans residues 130-153 (WLPEGWVPYPVAWLLSFPSAPIGS). The chain crosses the membrane as a helical span at residues 154-170 (VSSGAWGAICRRVLSTL). The Cytoplasmic segment spans residues 171–215 (QEIIQSLLAPSPAATGPVPTGPSSAKNDQPEAKIEALALEHEKLD). The interval 182–202 (PAATGPVPTGPSSAKNDQPEA) is disordered.

The protein belongs to the WRB/GET1 family. Interacts with GET3.

It is found in the endoplasmic reticulum membrane. In terms of biological role, required for the post-translational delivery of tail-anchored (TA) proteins to the endoplasmic reticulum. Acts as a membrane receptor for soluble GET3, which recognizes and selectively binds the transmembrane domain of TA proteins in the cytosol. The polypeptide is Protein GET1 (Cryptococcus neoformans var. neoformans serotype D (strain JEC21 / ATCC MYA-565) (Filobasidiella neoformans)).